The chain runs to 435 residues: Proline and serine-rich protein 2 (435 aa).

A compositionally biased stretch (basic and acidic residues) spans 1–10 (MPVTHRKSDA). Residues 1-22 (MPVTHRKSDASDMNSDTSPSCR) form a disordered region. Serine 8 is modified (phosphoserine). The segment covering 11 to 20 (SDMNSDTSPS) has biased composition (polar residues). Serine 43 carries the phosphoserine modification. A Phosphothreonine modification is found at threonine 45. 2 stretches are compositionally biased toward low complexity: residues 92–102 (PSLEESTSSPS) and 113–126 (PAPG…LPEG). 2 disordered regions span residues 92 to 276 (PSLE…RAAV) and 295 to 420 (AFPA…SEEA). Threonine 146 carries the post-translational modification Phosphothreonine. A compositionally biased stretch (pro residues) spans 146 to 169 (TPPPPDPPAPETLLAPPPLPSTPD). Serine 166 is subject to Phosphoserine. Phosphothreonine is present on threonine 167. Phosphoserine is present on residues serine 179, serine 212, and serine 215. Residues 228 to 237 (PAARGPRSGD) show a composition bias toward low complexity. Residue arginine 252 is modified to Asymmetric dimethylarginine; alternate. Residue arginine 252 is modified to Omega-N-methylarginine; alternate. Gly residues predominate over residues 302-311 (AGEGAPGGGS). Phosphoserine is present on serine 312. Position 320 is an omega-N-methylarginine; alternate (arginine 320). Arginine 320 is subject to Dimethylated arginine; alternate. Arginine 378 carries the omega-N-methylarginine modification. The residue at position 400 (serine 400) is a Phosphoserine. Position 414 is an omega-N-methylarginine (arginine 414).

The sequence is that of Proline and serine-rich protein 2 (PROSER2) from Homo sapiens (Human).